Here is a 332-residue protein sequence, read N- to C-terminus: Chorismate synthase (332 aa).

R46 provides a ligand contact to NADP(+). Residues 123 to 125, G253, 268 to 272, and R295 contribute to the FMN site; these read HFS and KPTSS.

Belongs to the chorismate synthase family. Homotetramer. FMNH2 is required as a cofactor.

The catalysed reaction is 5-O-(1-carboxyvinyl)-3-phosphoshikimate = chorismate + phosphate. It functions in the pathway metabolic intermediate biosynthesis; chorismate biosynthesis; chorismate from D-erythrose 4-phosphate and phosphoenolpyruvate: step 7/7. Catalyzes the anti-1,4-elimination of the C-3 phosphate and the C-6 proR hydrogen from 5-enolpyruvylshikimate-3-phosphate (EPSP) to yield chorismate, which is the branch point compound that serves as the starting substrate for the three terminal pathways of aromatic amino acid biosynthesis. This reaction introduces a second double bond into the aromatic ring system. This Chitinophaga pinensis (strain ATCC 43595 / DSM 2588 / LMG 13176 / NBRC 15968 / NCIMB 11800 / UQM 2034) protein is Chorismate synthase.